The primary structure comprises 327 residues: Methionine import ATP-binding protein MetN (327 aa).

Residues 3 to 239 (VELKNIEKIY…PKHAVTKELL (237 aa)) form the ABC transporter domain. Residue 36 to 43 (GYSGAGKS) coordinates ATP.

This sequence belongs to the ABC transporter superfamily. Methionine importer (TC 3.A.1.24) family. The complex is composed of two ATP-binding proteins (MetN), two transmembrane proteins (MetI) and a solute-binding protein (MetQ).

The protein localises to the cell inner membrane. The enzyme catalyses L-methionine(out) + ATP + H2O = L-methionine(in) + ADP + phosphate + H(+). It catalyses the reaction D-methionine(out) + ATP + H2O = D-methionine(in) + ADP + phosphate + H(+). In terms of biological role, part of the ABC transporter complex MetNIQ involved in methionine import. Responsible for energy coupling to the transport system. In Helicobacter pylori (strain HPAG1), this protein is Methionine import ATP-binding protein MetN.